Reading from the N-terminus, the 316-residue chain is Glutathione synthetase (316 aa).

The 186-residue stretch at 125-310 (KLFTAWFSDL…ITGMLMDAIE (186 aa)) folds into the ATP-grasp domain. An N-beta-linked (GlcNAc) arginine glycan is attached at Arg-256. Residues Glu-281 and Asn-283 each coordinate Mg(2+).

It belongs to the prokaryotic GSH synthase family. Mg(2+) is required as a cofactor. Mn(2+) serves as cofactor.

It catalyses the reaction gamma-L-glutamyl-L-cysteine + glycine + ATP = glutathione + ADP + phosphate + H(+). It functions in the pathway sulfur metabolism; glutathione biosynthesis; glutathione from L-cysteine and L-glutamate: step 2/2. This is Glutathione synthetase from Escherichia coli O127:H6 (strain E2348/69 / EPEC).